The following is a 175-amino-acid chain: Ribosome maturation factor RimM (175 aa).

The region spanning 94 to 166 (SDSWYEHELI…FIRLVPPGGL (73 aa)) is the PRC barrel domain.

The protein belongs to the RimM family. In terms of assembly, binds ribosomal protein uS19.

The protein resides in the cytoplasm. In terms of biological role, an accessory protein needed during the final step in the assembly of 30S ribosomal subunit, possibly for assembly of the head region. Essential for efficient processing of 16S rRNA. May be needed both before and after RbfA during the maturation of 16S rRNA. It has affinity for free ribosomal 30S subunits but not for 70S ribosomes. This Renibacterium salmoninarum (strain ATCC 33209 / DSM 20767 / JCM 11484 / NBRC 15589 / NCIMB 2235) protein is Ribosome maturation factor RimM.